We begin with the raw amino-acid sequence, 197 residues long: HTH-type transcriptional regulator BetI (197 aa).

An HTH tetR-type domain is found at 8–68 (PIRRSQLIHA…ATMRHLLSAL (61 aa)). The segment at residues 31–50 (SIALIARLAGVSNGIISHYF) is a DNA-binding region (H-T-H motif).

It participates in amine and polyamine biosynthesis; betaine biosynthesis via choline pathway [regulation]. Its function is as follows. Repressor involved in the biosynthesis of the osmoprotectant glycine betaine. It represses transcription of the choline transporter BetT and the genes of BetAB involved in the synthesis of glycine betaine. The polypeptide is HTH-type transcriptional regulator BetI (Pseudomonas aeruginosa (strain LESB58)).